Here is a 246-residue protein sequence, read N- to C-terminus: Probable transcriptional regulatory protein YebC (246 aa).

A disordered region spans residues 1–20 (MAGHSKWANTRHRKAAQDAK).

This sequence belongs to the TACO1 family.

The protein localises to the cytoplasm. This is Probable transcriptional regulatory protein YebC from Escherichia coli O6:K15:H31 (strain 536 / UPEC).